The primary structure comprises 960 residues: MASERHHSIDAQLRALAPGKVSEELIQYDALLVDRFLDILQDLHGPSLREFVQECYEVSADYEGKKDTSKLGELGAKLTGLAPADAILVASSILHMLNLANLAEEVELAHRRRNSKLKHGDFSDEGSATTESDIEETLKRLVSLGKTPAEVFEALKNQSVDLVFTAHPTQSARRSLLQKNARIRNCLTQLSAKDVTVEDKKELDEALHREIQAAFRTDEIRRAQPTPQDEMRYGMSYIHETVWNGVPKFLRRVDTALKNIGINERLPYDVPLIKFCSWMGGDRDGNPRVTPEVTRDVCLLSRMMAANLYINQVEDLMFELSMWRCNDELRARAEEVQSTPASKKVTKYYIEFWKQIPPNEPYRVILGAVRDKLYNTRERARHLLATGFSEISEDAVFTKIEEFLEPLELCYKSLCECGDKAIADGSLLDLLRQVFTFGLSLVKLDIRQESERQTDVIDAITTHLGIGSYRSWPEDKRMEWLVSELKGKRPLLPPDLPMTEEIADVIGAMRVLAELPIDSFGPYIISMCTAPSDVLAVELLQRECGIRQTLPVVPLFERLADLQAAPASVEKLFSTDWYINHINGKQQVMVGYSDSGKDAGRLSAAWQLYVAQEEMAKVAKKYGVKLTLFHGRGGTVGRGGGPTHLAILSQPPDTINGSIRVTVQGEVIEFMFGEENLCFQSLQRFTAATLEHGMHPPVSPKPEWRKLMEEMAVVATEEYRSVVVKEPRFVEYFRSATPETEYGKMNIGSRPAKRRPGGGITTLRAIPWIFSWTQTRFHLPVWLGVGAAFKWAIDKDIKNFQKLKEMYNEWPFFRVTLDLLEMVFAKGDPGIAGLYDELLVAEELKPFGKQLRDKYVETQQLLLQIAGHKDILEGDPYLKQGLRLRNPYITTLNVFQAYTLKRIRDPSFKVTPQPPLSKEFADENKPAGLVKLNGERVPPGLEDTLILTMKGIAAGMQNTG.

Serine 8 is subject to Phosphoserine. Residues histidine 167 and lysine 597 contribute to the active site.

It belongs to the PEPCase type 1 family. In terms of assembly, homotetramer. It depends on Mg(2+) as a cofactor.

The protein resides in the cytoplasm. The enzyme catalyses oxaloacetate + phosphate = phosphoenolpyruvate + hydrogencarbonate. Its pathway is photosynthesis; C4 acid pathway. Its activity is regulated as follows. By light-reversible phosphorylation. In terms of biological role, through the carboxylation of phosphoenolpyruvate (PEP) it forms oxaloacetate, a four-carbon dicarboxylic acid source for the tricarboxylic acid cycle. This is Phosphoenolpyruvate carboxylase 3 from Sorghum bicolor (Sorghum).